A 429-amino-acid chain; its full sequence is Fumarylacetoacetase (429 aa).

Residue aspartate 139 participates in Ca(2+) binding. Histidine 146 acts as the Proton acceptor in catalysis. Arginine 155 serves as a coordination point for substrate. Ca(2+) is bound by residues glutamate 212, glutamate 214, and aspartate 246. Aspartate 246 is a Mg(2+) binding site. Substrate is bound at residue glutamine 253. The Mg(2+) site is built by lysine 266 and threonine 270. Threonine 363 is a binding site for substrate.

This sequence belongs to the FAH family. Ca(2+) is required as a cofactor. The cofactor is Mg(2+).

It carries out the reaction 4-fumarylacetoacetate + H2O = acetoacetate + fumarate + H(+). The protein operates within amino-acid degradation; L-phenylalanine degradation; acetoacetate and fumarate from L-phenylalanine: step 6/6. Functionally, converts fumarylacetoacetate to acetoacetate and fumarate. Involved in tyrosine catabolic pathway. Catalyzes the final step in the tyrosine degradation pathway. The protein is Fumarylacetoacetase of Oryza sativa subsp. japonica (Rice).